The sequence spans 711 residues: Tyrosine-protein phosphatase 2 (711 aa).

The region spanning 21–130 is the Rhodanese domain; sequence TESVSWIIDL…FASSHPDAIV (110 aa). Disordered regions lie at residues 275–306 and 329–376; these read APQQTPARPSLRSVPSYPSSNNQRRPSASRVR and IIPR…RANK. Polar residues-rich tracts occupy residues 290–306 and 340–363; these read SYPSSNNQRRPSASRVR and NAQNDGTSTMTSKLKPSVGLSNTR. A Tyrosine-protein phosphatase domain is found at 433–698; the sequence is EMTRSLAFND…KFLYDVVDYL (266 aa). C630 serves as the catalytic Phosphocysteine intermediate.

The protein belongs to the protein-tyrosine phosphatase family. Non-receptor class subfamily.

The protein resides in the cytoplasm. The enzyme catalyses O-phospho-L-tyrosyl-[protein] + H2O = L-tyrosyl-[protein] + phosphate. In terms of biological role, plays a role in inhibiting the onset of mitosis. Dephosphorylates sty1/spc1 and wis1/spc2/sty2. This Schizosaccharomyces pombe (strain 972 / ATCC 24843) (Fission yeast) protein is Tyrosine-protein phosphatase 2 (pyp2).